The sequence spans 201 residues: Small ribosomal subunit protein uS4c (201 aa).

Positions 20–44 (GLTSKRPRAGSDLRNQSRSGKKSQY) are disordered. The S4 RNA-binding domain maps to 89 to 152 (MRLDNILFRL…NSRTLVQNLL (64 aa)).

This sequence belongs to the universal ribosomal protein uS4 family. In terms of assembly, part of the 30S ribosomal subunit. Contacts protein S5. The interaction surface between S4 and S5 is involved in control of translational fidelity.

It is found in the plastid. It localises to the chloroplast. In terms of biological role, one of the primary rRNA binding proteins, it binds directly to 16S rRNA where it nucleates assembly of the body of the 30S subunit. Functionally, with S5 and S12 plays an important role in translational accuracy. This is Small ribosomal subunit protein uS4c (rps4) from Arabis hirsuta (Hairy rock-cress).